The following is a 511-amino-acid chain: Exodeoxyribonuclease 7 large subunit (511 aa).

It belongs to the XseA family. In terms of assembly, heterooligomer composed of large and small subunits.

The protein resides in the cytoplasm. It catalyses the reaction Exonucleolytic cleavage in either 5'- to 3'- or 3'- to 5'-direction to yield nucleoside 5'-phosphates.. Its function is as follows. Bidirectionally degrades single-stranded DNA into large acid-insoluble oligonucleotides, which are then degraded further into small acid-soluble oligonucleotides. This chain is Exodeoxyribonuclease 7 large subunit, found in Brucella abortus (strain S19).